Reading from the N-terminus, the 242-residue chain is Tryptophan synthase alpha chain (242 aa).

Residues Glu-31 and Asp-42 each act as proton acceptor in the active site.

Belongs to the TrpA family. In terms of assembly, tetramer of two alpha and two beta chains.

It carries out the reaction (1S,2R)-1-C-(indol-3-yl)glycerol 3-phosphate + L-serine = D-glyceraldehyde 3-phosphate + L-tryptophan + H2O. Its pathway is amino-acid biosynthesis; L-tryptophan biosynthesis; L-tryptophan from chorismate: step 5/5. The alpha subunit is responsible for the aldol cleavage of indoleglycerol phosphate to indole and glyceraldehyde 3-phosphate. The sequence is that of Tryptophan synthase alpha chain from Staphylococcus aureus (strain bovine RF122 / ET3-1).